The sequence spans 284 residues: Gap junction beta-1 protein (284 aa).

The Cytoplasmic portion of the chain corresponds to 1–22 (MNWTGLYTLLSGVNRHSTAIGR). Residues 23 to 45 (VWLSVIFIFRIMVLVVAAESVWG) form a helical membrane-spanning segment. The Extracellular segment spans residues 46–75 (DEKSSFICNTLQPGCNSVCYDHFFPISHVR). A helical membrane pass occupies residues 76–95 (LWSLQLILVSTPALLVAMHV). Over 96–130 (AHQQHIEKKMLRLEGHGDPLHLEEVKRHKVHISGT) the chain is Cytoplasmic. Residues 131-153 (LWWTYVISVVFRLLFEAAFMYVF) form a helical membrane-spanning segment. Topologically, residues 154–191 (YLLYPGYAMVRLVKCDAYPCPNTVDCFVSRPTEKTIFT) are extracellular. The chain crosses the membrane as a helical span at residues 192-214 (VFMLAASGICIILNVAEVVYLIF). Over 215–284 (RACARRAQRR…AEKSDRCSAC (70 aa)) the chain is Cytoplasmic. 4 positions are modified to phosphoserine: Ser233, Ser259, Ser267, and Ser278.

Belongs to the connexin family. Beta-type (group I) subfamily. A connexon is composed of a hexamer of connexins. Interacts with CNST.

The protein resides in the cell membrane. It is found in the cell junction. Its subcellular location is the gap junction. One gap junction consists of a cluster of closely packed pairs of transmembrane channels, the connexons, through which materials of low MW diffuse from one cell to a neighboring cell. The protein is Gap junction beta-1 protein (GJB1) of Bos taurus (Bovine).